The sequence spans 335 residues: Adenosine deaminase (335 aa).

His-12 and His-14 together coordinate Zn(2+). Residues His-14 and Asp-16 each coordinate substrate. His-197 is a binding site for Zn(2+). Glu-200 acts as the Proton donor in catalysis. Residue Asp-278 participates in Zn(2+) binding.

Belongs to the metallo-dependent hydrolases superfamily. Adenosine and AMP deaminases family. Adenosine deaminase subfamily. Requires Zn(2+) as cofactor.

The enzyme catalyses adenosine + H2O + H(+) = inosine + NH4(+). The catalysed reaction is 2'-deoxyadenosine + H2O + H(+) = 2'-deoxyinosine + NH4(+). Its function is as follows. Catalyzes the hydrolytic deamination of adenosine and 2-deoxyadenosine. The chain is Adenosine deaminase from Clostridium botulinum (strain Loch Maree / Type A3).